The primary structure comprises 341 residues: Anthranilate phosphoribosyltransferase (341 aa).

Residues G84, 87–88 (GD), T92, 94–97 (NIST), 112–120 (KHGNRSVSS), and S124 contribute to the 5-phospho-alpha-D-ribose 1-diphosphate site. G84 is an anthranilate binding site. S96 contacts Mg(2+). Residue N115 participates in anthranilate binding. R170 serves as a coordination point for anthranilate. Mg(2+)-binding residues include D229 and E230.

It belongs to the anthranilate phosphoribosyltransferase family. Homodimer. The cofactor is Mg(2+).

The enzyme catalyses N-(5-phospho-beta-D-ribosyl)anthranilate + diphosphate = 5-phospho-alpha-D-ribose 1-diphosphate + anthranilate. It functions in the pathway amino-acid biosynthesis; L-tryptophan biosynthesis; L-tryptophan from chorismate: step 2/5. Catalyzes the transfer of the phosphoribosyl group of 5-phosphorylribose-1-pyrophosphate (PRPP) to anthranilate to yield N-(5'-phosphoribosyl)-anthranilate (PRA). The polypeptide is Anthranilate phosphoribosyltransferase (Polynucleobacter asymbioticus (strain DSM 18221 / CIP 109841 / QLW-P1DMWA-1) (Polynucleobacter necessarius subsp. asymbioticus)).